Consider the following 89-residue polypeptide: Small ribosomal subunit protein uS15 (89 aa).

It belongs to the universal ribosomal protein uS15 family. In terms of assembly, part of the 30S ribosomal subunit. Forms a bridge to the 50S subunit in the 70S ribosome, contacting the 23S rRNA.

Functionally, one of the primary rRNA binding proteins, it binds directly to 16S rRNA where it helps nucleate assembly of the platform of the 30S subunit by binding and bridging several RNA helices of the 16S rRNA. Its function is as follows. Forms an intersubunit bridge (bridge B4) with the 23S rRNA of the 50S subunit in the ribosome. The sequence is that of Small ribosomal subunit protein uS15 from Alcanivorax borkumensis (strain ATCC 700651 / DSM 11573 / NCIMB 13689 / SK2).